A 319-amino-acid chain; its full sequence is Vesicle-associated membrane protein-associated protein scs22 (319 aa).

Residues 1-121 (MALECDSTIV…SERKIRCVYS (121 aa)) enclose the MSP domain. Residues 1–298 (MALECDSTIV…GAKVVPQIHN (298 aa)) lie on the Cytoplasmic side of the membrane. The span at 127–150 (ANAHANAHHQPAQTTTTSIPTSAT) shows a compositional bias: low complexity. Residues 127 to 244 (ANAHANAHHQ…TTSPNNENNA (118 aa)) form a disordered region. Polar residues-rich tracts occupy residues 151–165 (DNYT…QSYS), 185–201 (STAT…SAVS), and 231–244 (SVPT…ENNA). Thr-236 is modified (phosphothreonine). Phosphoserine occurs at positions 237 and 281. A helical; Anchor for type IV membrane protein transmembrane segment spans residues 299-319 (TVTVQTAFLLAIICFLIGLLF).

Belongs to the VAMP-associated protein (VAP) (TC 9.B.17) family. In terms of assembly, interacts with epr1.

It is found in the endoplasmic reticulum membrane. In terms of biological role, vesicle-associated membrane protein-associated protein (VAP) implicated in maintaining the cortical endoplasmic reticulum (ER)-plasma membrane (PM) attachment. ER-PM contacts function to modulate the distribution of contractile ring components to ensure robust ring assembly. ER-PM contacts function also in controlling exocytosis and maintenance of cell polarity regulating cell shape. VAPs play an important role in regulating eisosome assembly. VAPs also contribute to ER-phagy by tethering atg8 to the ER membrane, but also by maintaining the ER-plasma membrane contact. In Schizosaccharomyces pombe (strain 972 / ATCC 24843) (Fission yeast), this protein is Vesicle-associated membrane protein-associated protein scs22 (scs22).